The chain runs to 480 residues: uncharacterized protein (480 aa).

Lysine 222 is modified (N6-(pyridoxal phosphate)lysine).

The protein belongs to the Orn/Lys/Arg decarboxylase class-I family. It depends on pyridoxal 5'-phosphate as a cofactor.

This is an uncharacterized protein from Bacillus subtilis (strain 168).